A 102-amino-acid polypeptide reads, in one-letter code: Cytochrome c (102 aa).

Position 1 is an N-acetylglycine (Gly1). Residues 1–11 (GDAERGKKLFE) show a composition bias toward basic and acidic residues. A disordered region spans residues 1–26 (GDAERGKKLFESRAGQCHSSQKGVNS). Residues Cys17, His18, and Met79 each coordinate heme c. Residues 17-26 (CHSSQKGVNS) are compositionally biased toward polar residues. An N6,N6,N6-trimethyllysine modification is found at Lys85.

It belongs to the cytochrome c family. Post-translationally, binds 1 heme c group covalently per subunit.

It localises to the mitochondrion intermembrane space. Electron carrier protein. The oxidized form of the cytochrome c heme group can accept an electron from the heme group of the cytochrome c1 subunit of cytochrome reductase. Cytochrome c then transfers this electron to the cytochrome oxidase complex, the final protein carrier in the mitochondrial electron-transport chain. The polypeptide is Cytochrome c (Euglena viridis (Cercaria viridis)).